The primary structure comprises 186 residues: Elongation factor P (186 aa).

It belongs to the elongation factor P family.

The protein localises to the cytoplasm. It participates in protein biosynthesis; polypeptide chain elongation. Its function is as follows. Involved in peptide bond synthesis. Stimulates efficient translation and peptide-bond synthesis on native or reconstituted 70S ribosomes in vitro. Probably functions indirectly by altering the affinity of the ribosome for aminoacyl-tRNA, thus increasing their reactivity as acceptors for peptidyl transferase. This chain is Elongation factor P, found in Coprothermobacter proteolyticus (strain ATCC 35245 / DSM 5265 / OCM 4 / BT).